Consider the following 451-residue polypeptide: Signal recognition particle protein (451 aa).

Residues 107 to 114, 190 to 194, and 248 to 251 contribute to the GTP site; these read GLQGSGKT, DTAGR, and TKTD.

Belongs to the GTP-binding SRP family. SRP54 subfamily. In terms of assembly, part of the signal recognition particle protein translocation system, which is composed of SRP and FtsY. SRP is a ribonucleoprotein composed of Ffh and a 4.5S RNA molecule.

Its subcellular location is the cytoplasm. It catalyses the reaction GTP + H2O = GDP + phosphate + H(+). In terms of biological role, involved in targeting and insertion of nascent membrane proteins into the cytoplasmic membrane. Binds to the hydrophobic signal sequence of the ribosome-nascent chain (RNC) as it emerges from the ribosomes. The SRP-RNC complex is then targeted to the cytoplasmic membrane where it interacts with the SRP receptor FtsY. Interaction with FtsY leads to the transfer of the RNC complex to the Sec translocase for insertion into the membrane, the hydrolysis of GTP by both Ffh and FtsY, and the dissociation of the SRP-FtsY complex into the individual components. The polypeptide is Signal recognition particle protein (Buchnera aphidicola subsp. Acyrthosiphon pisum (strain APS) (Acyrthosiphon pisum symbiotic bacterium)).